The primary structure comprises 20 residues: Transcriptional regulatory protein PufK (20 aa).

Residues 1–11 (MVPYRNPRHQH) are compositionally biased toward basic residues. The disordered stretch occupies residues 1–20 (MVPYRNPRHQHVASVLRSGG).

Involved in the transcriptional regulation of pufB. The sequence is that of Transcriptional regulatory protein PufK (pufK) from Cereibacter sphaeroides (strain ATCC 17023 / DSM 158 / JCM 6121 / CCUG 31486 / LMG 2827 / NBRC 12203 / NCIMB 8253 / ATH 2.4.1.) (Rhodobacter sphaeroides).